The primary structure comprises 349 residues: Farnesyl pyrophosphate synthase vrtD (349 aa).

Isopentenyl diphosphate-binding residues include K53, R56, and Q92. 2 residues coordinate Mg(2+): D99 and D103. R108 serves as a coordination point for dimethylallyl diphosphate. Residue R109 coordinates isopentenyl diphosphate. Positions 196, 197, 236, 253, and 262 each coordinate dimethylallyl diphosphate.

The protein belongs to the FPP/GGPP synthase family. The cofactor is Mg(2+).

The enzyme catalyses isopentenyl diphosphate + dimethylallyl diphosphate = (2E)-geranyl diphosphate + diphosphate. It catalyses the reaction isopentenyl diphosphate + (2E)-geranyl diphosphate = (2E,6E)-farnesyl diphosphate + diphosphate. The protein operates within secondary metabolite biosynthesis; terpenoid biosynthesis. Functionally, farnesyl pyrophosphate synthase; part of the gene cluster that mediates the biosynthesis of viridicatumtoxin, a tetracycline-like fungal meroterpenoid with a unique, fused spirobicyclic ring system. The first step of the pathway is the production of the malonamoyl-CoA starter unit for the polyketide synthase vrtA. The aldolase vrtJ may be involved in the synthesis of the malonamate substrate for malonamoyl-CoA synthetase vrtB. The polyketide synthase vrtA then may utilize the malonamoyl-CoA starter unit, followed by sequential condensation of eight malonyl-CoA units to form the polyketide backbone. The cyclization of the last ring could be mediated by the lactamase-like protein vrtG. The proposed post-PKS tailoring steps are a hydroxylation at C5 catalyzed the cytochrome P450 monooxygenase vrtE, a hydroxylation at C12a catalyzed by VrtH and/or VrtI, and an O-methylation by the O-methyltransferase vrtF. VrtC is then proposed to catalyze the transfer of a geranyl group synthesized by vrtD to the aromatic C ring of the tetracyclic polyketide intermediate of viridicatumtoxin to yield previridicatumtoxin. Finally, the cytochrome P450 monooxygenase vrtK catalyzes the spirocyclization of the geranyl moiety of previridicatumtoxin to afford viridicatumtoxin. The chain is Farnesyl pyrophosphate synthase vrtD from Penicillium aethiopicum.